A 479-amino-acid polypeptide reads, in one-letter code: GMP reductase (479 aa).

CBS domains are found at residues 96–153 (VLDT…VRDI) and 154–212 (AVTD…ATDS). Residues 246–248 (DTA) and 296–298 (GVG) each bind NADP(+). The Thioimidate intermediate role is filled by cysteine 303.

It belongs to the IMPDH/GMPR family. GuaB1 subfamily. It depends on a monovalent cation as a cofactor.

It carries out the reaction IMP + NH4(+) + NADP(+) = GMP + NADPH + 2 H(+). The protein operates within purine metabolism; IMP biosynthesis via salvage pathway. Involved in the purine-salvage pathway. Catalyzes the NADPH-dependent conversion of GMP to IMP. The protein is GMP reductase of Mycobacterium bovis (strain ATCC BAA-935 / AF2122/97).